We begin with the raw amino-acid sequence, 218 residues long: Superoxide dismutase [Mn], mitochondrial (218 aa).

His-27, His-84, Asp-174, and His-178 together coordinate Mn(2+).

It belongs to the iron/manganese superoxide dismutase family. In terms of assembly, homotetramer. It depends on Mn(2+) as a cofactor.

It is found in the mitochondrion matrix. It carries out the reaction 2 superoxide + 2 H(+) = H2O2 + O2. Functionally, destroys superoxide anion radicals which are normally produced within the cells and which are toxic to biological systems. The polypeptide is Superoxide dismutase [Mn], mitochondrial (SODA) (Chlamydomonas reinhardtii (Chlamydomonas smithii)).